The chain runs to 988 residues: Chitin synthase 1 (988 aa).

Residues 29-75 (QHHWPPSSGSSLGRAPSIPLSSSNPRSPIRPSTPSRVSTDWTRPPAP) form a disordered region. Over residues 44–66 (PSIPLSSSNPRSPIRPSTPSRVS) the composition is skewed to low complexity. 7 consecutive transmembrane segments (helical) span residues 577-596 (WLNG…KQIW), 616-636 (FISL…FYFV), 656-676 (IFVI…ILSL), 732-752 (IFTN…LMSF), 764-784 (SAQY…YAFC), 864-884 (YVVA…SEAY), and 911-931 (AIGS…EGRI). The disordered stretch occupies residues 950–988 (AGLGSGFSESGKTGITSGSGMSGMSLSDVTSKISEKLAG). The span at 957-976 (SESGKTGITSGSGMSGMSLS) shows a compositional bias: low complexity.

It belongs to the chitin synthase family. Class II subfamily.

The protein localises to the cell membrane. It carries out the reaction [(1-&gt;4)-N-acetyl-beta-D-glucosaminyl](n) + UDP-N-acetyl-alpha-D-glucosamine = [(1-&gt;4)-N-acetyl-beta-D-glucosaminyl](n+1) + UDP + H(+). Functionally, polymerizes chitin, a structural polymer of the cell wall and septum, by transferring the sugar moiety of UDP-GlcNAc to the non-reducing end of the growing chitin polymer. CHS1 mainly responsible for normal yeast cell reproductive growth. The chain is Chitin synthase 1 from Exophiala dermatitidis (Black yeast-like fungus).